The following is a 551-amino-acid chain: Cation/acetate symporter ActP (551 aa).

Helical transmembrane passes span 8–28 (ALAATLLPLGAHAADAITGAV), 35–55 (WQAIVMFLIFVALTLYITYWA), 78–98 (GLAIAGDFMSAASFLGISALV), 105–125 (GLIYSLGFLVGWPIILFLIAE), 151–171 (LSACGSLVVVALYLIAQMVGA), 185–205 (VAVVLVGVLMVLYVLFGGMLA), 208–228 (WVQIIKAVLLLCGASFMAFMV), 264–284 (ISALSLGLGLMFGTAGLPHIL), 305–325 (GFMGYFYILTFIIGFGAIMLV), 357–377 (LFLGFISAVAFATILAVVAGL), 406–426 (VSKITVLILGVVAILLGILFE), 430–450 (IAFMVGLAFSIAASCNFPIIL), 465–485 (VGGWLGLLTAVILMILGPTIW), and 496–516 (FPYEYPALFSIAIAFIGIWVF).

This sequence belongs to the sodium:solute symporter (SSF) (TC 2.A.21) family.

It is found in the cell inner membrane. Transports acetate. The sequence is that of Cation/acetate symporter ActP from Klebsiella pneumoniae (strain 342).